We begin with the raw amino-acid sequence, 405 residues long: Argininosuccinate synthase (405 aa).

11 to 19 (AYSGGLDTS) contributes to the ATP binding site. Tyrosine 90 is a binding site for L-citrulline. ATP is bound at residue glycine 119. The L-aspartate site is built by threonine 121, asparagine 125, and aspartate 126. Residue asparagine 125 coordinates L-citrulline. L-citrulline contacts are provided by arginine 129, serine 178, serine 187, glutamate 263, and tyrosine 275.

This sequence belongs to the argininosuccinate synthase family. Type 1 subfamily. As to quaternary structure, homotetramer.

It is found in the cytoplasm. It catalyses the reaction L-citrulline + L-aspartate + ATP = 2-(N(omega)-L-arginino)succinate + AMP + diphosphate + H(+). It participates in amino-acid biosynthesis; L-arginine biosynthesis; L-arginine from L-ornithine and carbamoyl phosphate: step 2/3. In Legionella pneumophila (strain Corby), this protein is Argininosuccinate synthase.